Reading from the N-terminus, the 154-residue chain is Cytochrome c-550 (154 aa).

The N-terminal stretch at 1–20 is a signal peptide; that stretch reads MKISIYATLAALSLALPAVA. The residue at position 21 (Gln-21) is a Pyrrolidone carboxylic acid. Heme c is bound by residues Cys-35, Cys-38, His-39, and Met-120. Residues 150–154 constitute a propeptide that is removed on maturation; the sequence is EGAAN.

Post-translationally, binds 1 heme c group covalently per subunit.

The polypeptide is Cytochrome c-550 (cyc) (Paracoccus versutus (Thiobacillus versutus)).